Consider the following 339-residue polypeptide: Heat-inducible transcription repressor HrcA (339 aa).

This sequence belongs to the HrcA family.

Functionally, negative regulator of class I heat shock genes (grpE-dnaK-dnaJ and groELS operons). Prevents heat-shock induction of these operons. This is Heat-inducible transcription repressor HrcA from Paraburkholderia phymatum (strain DSM 17167 / CIP 108236 / LMG 21445 / STM815) (Burkholderia phymatum).